An 86-amino-acid chain; its full sequence is Translation initiation factor IF-1 3 (86 aa).

Residues 1 to 72 enclose the S1-like domain; the sequence is MAKEELIEMQ…NKGRVTFRHI (72 aa).

Belongs to the IF-1 family. In terms of assembly, component of the 30S ribosomal translation pre-initiation complex which assembles on the 30S ribosome in the order IF-2 and IF-3, IF-1 and N-formylmethionyl-tRNA(fMet); mRNA recruitment can occur at any time during PIC assembly.

The protein localises to the cytoplasm. Its function is as follows. One of the essential components for the initiation of protein synthesis. Stabilizes the binding of IF-2 and IF-3 on the 30S subunit to which N-formylmethionyl-tRNA(fMet) subsequently binds. Helps modulate mRNA selection, yielding the 30S pre-initiation complex (PIC). Upon addition of the 50S ribosomal subunit IF-1, IF-2 and IF-3 are released leaving the mature 70S translation initiation complex. This chain is Translation initiation factor IF-1 3, found in Acidovorax sp. (strain JS42).